Here is a 324-residue protein sequence, read N- to C-terminus: Aspartate carbamoyltransferase catalytic subunit (324 aa).

2 residues coordinate carbamoyl phosphate: R71 and T72. Residue K99 participates in L-aspartate binding. The carbamoyl phosphate site is built by R121, H151, and Q154. R184 and R239 together coordinate L-aspartate. Residues G280 and P281 each contribute to the carbamoyl phosphate site.

The protein belongs to the aspartate/ornithine carbamoyltransferase superfamily. ATCase family. As to quaternary structure, heterododecamer (2C3:3R2) of six catalytic PyrB chains organized as two trimers (C3), and six regulatory PyrI chains organized as three dimers (R2).

It carries out the reaction carbamoyl phosphate + L-aspartate = N-carbamoyl-L-aspartate + phosphate + H(+). Its pathway is pyrimidine metabolism; UMP biosynthesis via de novo pathway; (S)-dihydroorotate from bicarbonate: step 2/3. Its function is as follows. Catalyzes the condensation of carbamoyl phosphate and aspartate to form carbamoyl aspartate and inorganic phosphate, the committed step in the de novo pyrimidine nucleotide biosynthesis pathway. In Cupriavidus necator (strain ATCC 17699 / DSM 428 / KCTC 22496 / NCIMB 10442 / H16 / Stanier 337) (Ralstonia eutropha), this protein is Aspartate carbamoyltransferase catalytic subunit.